Consider the following 343-residue polypeptide: Photosystem II protein D1 (343 aa).

A run of 3 helical transmembrane segments spans residues 28-45, 117-132, and 141-155; these read YIGWFGVLLFPLIAVSTV, HFLAAVLAWLGREYEY, and WIYLAFSAPVVAASA. Histidine 117 lines the chlorophyll a pocket. Tryptophan 125 contributes to the pheophytin a binding site. [CaMn4O5] cluster-binding residues include aspartate 169 and glutamate 188. A helical transmembrane segment spans residues 196-217; that stretch reads FHILGVSAVFGGSLFSAMHGSL. Histidine 197 provides a ligand contact to chlorophyll a. A quinone is bound by residues histidine 214 and 263 to 264; that span reads SF. Position 214 (histidine 214) interacts with Fe cation. A Fe cation-binding site is contributed by histidine 271. Residues 273–287 form a helical membrane-spanning segment; it reads FLAAWPVIGIWCTAI. Residues histidine 331, glutamate 332, aspartate 341, and alanine 343 each coordinate [CaMn4O5] cluster.

The protein belongs to the reaction center PufL/M/PsbA/D family. PSII is composed of 1 copy each of membrane proteins PsbA, PsbB, PsbC, PsbD, PsbE, PsbF, PsbH, PsbI, PsbJ, PsbK, PsbL, PsbM, PsbT, PsbX, PsbY, PsbZ, Psb30/Ycf12, at least 3 peripheral proteins of the oxygen-evolving complex and a large number of cofactors. It forms dimeric complexes. The cofactor is The D1/D2 heterodimer binds P680, chlorophylls that are the primary electron donor of PSII, and subsequent electron acceptors. It shares a non-heme iron and each subunit binds pheophytin, quinone, additional chlorophylls, carotenoids and lipids. D1 provides most of the ligands for the Mn4-Ca-O5 cluster of the oxygen-evolving complex (OEC). There is also a Cl(-1) ion associated with D1 and D2, which is required for oxygen evolution. The PSII complex binds additional chlorophylls, carotenoids and specific lipids.. Post-translationally, tyr-160 forms a radical intermediate that is referred to as redox-active TyrZ, YZ or Y-Z.

Its subcellular location is the plastid. It localises to the chloroplast thylakoid membrane. The enzyme catalyses 2 a plastoquinone + 4 hnu + 2 H2O = 2 a plastoquinol + O2. Functionally, photosystem II (PSII) is a light-driven water:plastoquinone oxidoreductase that uses light energy to abstract electrons from H(2)O, generating O(2) and a proton gradient subsequently used for ATP formation. It consists of a core antenna complex that captures photons, and an electron transfer chain that converts photonic excitation into a charge separation. The D1/D2 (PsbA/PsbD) reaction center heterodimer binds P680, the primary electron donor of PSII as well as several subsequent electron acceptors. The sequence is that of Photosystem II protein D1 from Prorocentrum micans (Red tide dinoflagellate).